The chain runs to 75 residues: Penaeidin-3k (75 aa).

Positions 1–19 (MRLVVCLVFLASFALVCQG) are cleaved as a signal peptide. Position 20 is a pyrrolidone carboxylic acid (Gln20). 3 cysteine pairs are disulfide-bonded: Cys44–Cys59, Cys48–Cys66, and Cys60–Cys67. Ser74 carries the serine amide modification.

The protein belongs to the penaeidin family.

The protein localises to the cytoplasmic granule. Functionally, antibacterial and antifungal activity. Presents chitin-binding activity. The chain is Penaeidin-3k from Penaeus setiferus (Atlantic white shrimp).